Here is a 321-residue protein sequence, read N- to C-terminus: Annexin A5 (321 aa).

Annexin repeat units lie at residues F15–R86, P87–Q158, A170–K242, and S246–G317.

It belongs to the annexin family.

Its function is as follows. Collagen-binding protein. In Gallus gallus (Chicken), this protein is Annexin A5 (ANXA5).